Reading from the N-terminus, the 100-residue chain is Large ribosomal subunit protein uL23 (100 aa).

This sequence belongs to the universal ribosomal protein uL23 family. Part of the 50S ribosomal subunit. Contacts protein L29, and trigger factor when it is bound to the ribosome.

Its function is as follows. One of the early assembly proteins it binds 23S rRNA. One of the proteins that surrounds the polypeptide exit tunnel on the outside of the ribosome. Forms the main docking site for trigger factor binding to the ribosome. The protein is Large ribosomal subunit protein uL23 of Mycobacterium leprae (strain Br4923).